A 310-amino-acid chain; its full sequence is Methionyl-tRNA formyltransferase (310 aa).

109–112 (SLLP) contacts (6S)-5,6,7,8-tetrahydrofolate.

Belongs to the Fmt family.

It carries out the reaction L-methionyl-tRNA(fMet) + (6R)-10-formyltetrahydrofolate = N-formyl-L-methionyl-tRNA(fMet) + (6S)-5,6,7,8-tetrahydrofolate + H(+). In terms of biological role, attaches a formyl group to the free amino group of methionyl-tRNA(fMet). The formyl group appears to play a dual role in the initiator identity of N-formylmethionyl-tRNA by promoting its recognition by IF2 and preventing the misappropriation of this tRNA by the elongation apparatus. The protein is Methionyl-tRNA formyltransferase of Pseudomonas entomophila (strain L48).